A 121-amino-acid chain; its full sequence is UPF0295 protein OB0906 (121 aa).

Transmembrane regions (helical) follow at residues 14-34 (IRTF…GGIL) and 43-63 (VIFF…YVWI).

The protein belongs to the UPF0295 family.

It localises to the cell membrane. This Oceanobacillus iheyensis (strain DSM 14371 / CIP 107618 / JCM 11309 / KCTC 3954 / HTE831) protein is UPF0295 protein OB0906.